Reading from the N-terminus, the 184-residue chain is Type-1 fimbrial protein, A chain (184 aa).

The first 23 residues, 1-23 (MKIKTLAIVVLSALSLSSTAALA), serve as a signal peptide directing secretion. A disulfide bridge connects residues cysteine 46 and cysteine 86.

This sequence belongs to the fimbrial protein family.

Its subcellular location is the fimbrium. In terms of biological role, fimbriae (also called pili), polar filaments radiating from the surface of the bacterium to a length of 0.5-1.5 micrometers and numbering 100-300 per cell, enable bacteria to colonize the epithelium of specific host organs. The sequence is that of Type-1 fimbrial protein, A chain from Escherichia coli.